The sequence spans 362 residues: GDSL esterase/lipase At5g22810 (362 aa).

A signal peptide spans 1–28 (MGFSGIWLNLYVVFGSLMVFERMVVMVV). Residue serine 44 is the Nucleophile of the active site. 4 N-linked (GlcNAc...) asparagine glycosylation sites follow: asparagine 159, asparagine 162, asparagine 264, and asparagine 329. Residues aspartate 337 and histidine 340 contribute to the active site.

It belongs to the 'GDSL' lipolytic enzyme family.

It is found in the secreted. This chain is GDSL esterase/lipase At5g22810, found in Arabidopsis thaliana (Mouse-ear cress).